The primary structure comprises 237 residues: Phosphoribosylaminoimidazole-succinocarboxamide synthase (237 aa).

The protein belongs to the SAICAR synthetase family.

The enzyme catalyses 5-amino-1-(5-phospho-D-ribosyl)imidazole-4-carboxylate + L-aspartate + ATP = (2S)-2-[5-amino-1-(5-phospho-beta-D-ribosyl)imidazole-4-carboxamido]succinate + ADP + phosphate + 2 H(+). It functions in the pathway purine metabolism; IMP biosynthesis via de novo pathway; 5-amino-1-(5-phospho-D-ribosyl)imidazole-4-carboxamide from 5-amino-1-(5-phospho-D-ribosyl)imidazole-4-carboxylate: step 1/2. This is Phosphoribosylaminoimidazole-succinocarboxamide synthase from Campylobacter fetus subsp. fetus (strain 82-40).